Consider the following 400-residue polypeptide: Mannitol-1-phosphate 5-dehydrogenase (400 aa).

NAD(+) is bound at residue 12–23 (AVHFGAGNIGRG). Residue Lys221 is part of the active site.

This sequence belongs to the mannitol dehydrogenase family. As to quaternary structure, monomer.

It catalyses the reaction D-mannitol 1-phosphate + NAD(+) = beta-D-fructose 6-phosphate + NADH + H(+). In terms of biological role, catalyzes the NAD(H)-dependent interconversion of D-fructose 6-phosphate and D-mannitol 1-phosphate in the mannitol metabolic pathway. This is Mannitol-1-phosphate 5-dehydrogenase from Pyricularia oryzae (strain Y34) (Rice blast fungus).